A 179-amino-acid chain; its full sequence is Large ribosomal subunit protein uL5 (179 aa).

It belongs to the universal ribosomal protein uL5 family. As to quaternary structure, part of the 50S ribosomal subunit; part of the 5S rRNA/L5/L18/L25 subcomplex. Contacts the 5S rRNA and the P site tRNA. Forms a bridge to the 30S subunit in the 70S ribosome.

Its function is as follows. This is one of the proteins that bind and probably mediate the attachment of the 5S RNA into the large ribosomal subunit, where it forms part of the central protuberance. In the 70S ribosome it contacts protein S13 of the 30S subunit (bridge B1b), connecting the 2 subunits; this bridge is implicated in subunit movement. Contacts the P site tRNA; the 5S rRNA and some of its associated proteins might help stabilize positioning of ribosome-bound tRNAs. This is Large ribosomal subunit protein uL5 from Burkholderia ambifaria (strain MC40-6).